A 787-amino-acid polypeptide reads, in one-letter code: Protocadherin beta-15 (787 aa).

Residues M1–A26 form the signal peptide. The Extracellular segment spans residues G27–L690. 5 consecutive Cadherin domains span residues V35 to F133, M138 to F242, Y247 to L347, L352 to F451, and Y456 to V561. An N-linked (GlcNAc...) asparagine glycan is attached at N418. A glycan (N-linked (GlcNAc...) asparagine) is linked at N567. Residues G568–L671 form the Cadherin 6 domain. The helical transmembrane segment at V691–V711 threads the bilayer. The Cytoplasmic portion of the chain corresponds to R712–E787.

It localises to the cell membrane. In terms of biological role, potential calcium-dependent cell-adhesion protein. May be involved in the establishment and maintenance of specific neuronal connections in the brain. This Homo sapiens (Human) protein is Protocadherin beta-15 (PCDHB15).